Here is a 251-residue protein sequence, read N- to C-terminus: DNA repair protein RecO (251 aa).

This sequence belongs to the RecO family.

Its function is as follows. Involved in DNA repair and RecF pathway recombination. This Acidiphilium cryptum (strain JF-5) protein is DNA repair protein RecO.